The primary structure comprises 611 residues: Threonine--tRNA ligase (611 aa).

A disordered region spans residues 1-27; that stretch reads MAGPEPEPVSSAAATTPAPSAPVVLPK. The span at 8–24 shows a compositional bias: low complexity; that stretch reads PVSSAAATTPAPSAPVV. The tract at residues 209-502 is catalytic; it reads DHRRIGKDLD…MTENYAGDYP (294 aa). 3 residues coordinate Zn(2+): Cys-302, His-353, and His-479.

Belongs to the class-II aminoacyl-tRNA synthetase family. In terms of assembly, homodimer. The cofactor is Zn(2+).

It localises to the cytoplasm. The enzyme catalyses tRNA(Thr) + L-threonine + ATP = L-threonyl-tRNA(Thr) + AMP + diphosphate + H(+). Catalyzes the attachment of threonine to tRNA(Thr) in a two-step reaction: L-threonine is first activated by ATP to form Thr-AMP and then transferred to the acceptor end of tRNA(Thr). Also edits incorrectly charged L-seryl-tRNA(Thr). The protein is Threonine--tRNA ligase of Synechococcus sp. (strain CC9605).